The primary structure comprises 482 residues: NADH-quinone oxidoreductase subunit D (482 aa).

The segment covering 1–16 has biased composition (low complexity); it reads MTTNTSTSSTTDDLTT. The disordered stretch occupies residues 1–48; it reads MTTNTSTSSTTDDLTTGAPNGTGAPDGANGVGGPTGTVGGPGEHPAYE. Over residues 29-42 the composition is skewed to gly residues; it reads NGVGGPTGTVGGPG.

This sequence belongs to the complex I 49 kDa subunit family. NDH-1 is composed of 14 different subunits. Subunits NuoB, C, D, E, F, and G constitute the peripheral sector of the complex.

The protein localises to the cell membrane. The enzyme catalyses a quinone + NADH + 5 H(+)(in) = a quinol + NAD(+) + 4 H(+)(out). NDH-1 shuttles electrons from NADH, via FMN and iron-sulfur (Fe-S) centers, to quinones in the respiratory chain. The immediate electron acceptor for the enzyme in this species is believed to be a menaquinone. Couples the redox reaction to proton translocation (for every two electrons transferred, four hydrogen ions are translocated across the cytoplasmic membrane), and thus conserves the redox energy in a proton gradient. The protein is NADH-quinone oxidoreductase subunit D of Frankia casuarinae (strain DSM 45818 / CECT 9043 / HFP020203 / CcI3).